We begin with the raw amino-acid sequence, 555 residues long: Formate--tetrahydrofolate ligase (555 aa).

65 to 72 (TPAGEGKS) contributes to the ATP binding site.

Belongs to the formate--tetrahydrofolate ligase family.

The enzyme catalyses (6S)-5,6,7,8-tetrahydrofolate + formate + ATP = (6R)-10-formyltetrahydrofolate + ADP + phosphate. It functions in the pathway one-carbon metabolism; tetrahydrofolate interconversion. The chain is Formate--tetrahydrofolate ligase from Staphylococcus aureus (strain COL).